A 351-amino-acid polypeptide reads, in one-letter code: Rhodopsin (351 aa).

Topologically, residues 1-36 (MNGTEGPYFYVPMVNTTGVVRSPYEYPQYYLVNPAA) are extracellular. N-linked (GlcNAc...) asparagine glycans are attached at residues Asn-2 and Asn-15. A helical transmembrane segment spans residues 37–61 (FAVLGAYMFFLIIFGFPINFLTLYV). Topologically, residues 62–73 (TLEHKKLRTPLN) are cytoplasmic. A helical transmembrane segment spans residues 74-96 (YILLNLAVADLFMVIGGFTTTMY). The Extracellular segment spans residues 97–110 (SSMHGYFVLGRLGC). A disulfide bridge links Cys-110 with Cys-187. A helical membrane pass occupies residues 111 to 133 (NLEGFSATLGGMISLWSLAVLAI). Positions 134–136 (ERW) match the 'Ionic lock' involved in activated form stabilization motif. Residues 134–152 (ERWVVVCKPTSNFRFGENH) are Cytoplasmic-facing. A helical transmembrane segment spans residues 153 to 173 (AIMGVSLTWTMALACTVPPLV). Residues 174-202 (GWSRYIPEGMQCSCGIDYYTRAEGFNNES) are Extracellular-facing. The N-linked (GlcNAc...) asparagine glycan is linked to Asn-200. A helical transmembrane segment spans residues 203–224 (FVLYMFFCHFMVPLIIIFFCYG). The Cytoplasmic segment spans residues 225 to 252 (RLLCAVKEAAAAQQESETTQRAEREVTR). Residues 253–274 (MVILMVIGYLVCWLPYASVAWF) form a helical membrane-spanning segment. Topologically, residues 275–286 (IFTHQGSEFGPL) are extracellular. Residues 287–308 (FMTIPAFFAKSSSIYNPVIYIC) traverse the membrane as a helical segment. An N6-(retinylidene)lysine modification is found at Lys-296. The Cytoplasmic portion of the chain corresponds to 309–351 (MNKQFRNCMITTLFCGKNPFEGEEEGASSTKTEASSASSVSPA). Residue Cys-323 is the site of S-palmitoyl cysteine attachment. Residues 330 to 351 (GEEEGASSTKTEASSASSVSPA) form a disordered region. Residues 335–351 (ASSTKTEASSASSVSPA) show a composition bias toward low complexity.

The protein belongs to the G-protein coupled receptor 1 family. Opsin subfamily. Post-translationally, phosphorylated on some or all of the serine and threonine residues present in the C-terminal region. In terms of processing, contains one covalently linked retinal chromophore.

It is found in the membrane. It localises to the cell projection. The protein localises to the cilium. The protein resides in the photoreceptor outer segment. Its function is as follows. Photoreceptor required for image-forming vision at low light intensity. While most salt water fish species use retinal as chromophore, most freshwater fish use 3-dehydroretinal, or a mixture of retinal and 3-dehydroretinal. Light-induced isomerization of 11-cis to all-trans retinal triggers a conformational change that activates signaling via G-proteins. Subsequent receptor phosphorylation mediates displacement of the bound G-protein alpha subunit by arrestin and terminates signaling. This is Rhodopsin (rho) from Neoniphon sammara (Spotfin squirrelfish).